Here is a 95-residue protein sequence, read N- to C-terminus: Large ribosomal subunit protein bL25 (95 aa).

The protein belongs to the bacterial ribosomal protein bL25 family. In terms of assembly, part of the 50S ribosomal subunit; part of the 5S rRNA/L5/L18/L25 subcomplex. Contacts the 5S rRNA. Binds to the 5S rRNA independently of L5 and L18.

Functionally, this is one of the proteins that binds to the 5S RNA in the ribosome where it forms part of the central protuberance. This chain is Large ribosomal subunit protein bL25, found in Shewanella baltica (strain OS223).